Here is a 181-residue protein sequence, read N- to C-terminus: ATP synthase subunit delta (181 aa).

It belongs to the ATPase delta chain family. In terms of assembly, F-type ATPases have 2 components, F(1) - the catalytic core - and F(0) - the membrane proton channel. F(1) has five subunits: alpha(3), beta(3), gamma(1), delta(1), epsilon(1). F(0) has three main subunits: a(1), b(2) and c(10-14). The alpha and beta chains form an alternating ring which encloses part of the gamma chain. F(1) is attached to F(0) by a central stalk formed by the gamma and epsilon chains, while a peripheral stalk is formed by the delta and b chains.

The protein resides in the cell membrane. In terms of biological role, f(1)F(0) ATP synthase produces ATP from ADP in the presence of a proton or sodium gradient. F-type ATPases consist of two structural domains, F(1) containing the extramembraneous catalytic core and F(0) containing the membrane proton channel, linked together by a central stalk and a peripheral stalk. During catalysis, ATP synthesis in the catalytic domain of F(1) is coupled via a rotary mechanism of the central stalk subunits to proton translocation. Functionally, this protein is part of the stalk that links CF(0) to CF(1). It either transmits conformational changes from CF(0) to CF(1) or is implicated in proton conduction. The chain is ATP synthase subunit delta from Mycoplasmoides gallisepticum (strain R(low / passage 15 / clone 2)) (Mycoplasma gallisepticum).